Consider the following 240-residue polypeptide: MMGVLKSAIGDMLMTFSWVVLSATFGIQTAAIISAGDFQAITWAPLVILTSLIFVYVSIFTVIFGSASFNPTGSAAFYVAGVPGDTLFSLAIRLPAQAIGAAGGALAIMEFIPEKYKHMIGGPSLQVDVHTGAIAETILSFGITFAVLLIILRGPRRLLAKTFLLALATISFVVAGSKYTGPAMNPAIAFGWAYMYSSHNTWDHIYVYWISSFVGALSAALLFRSIFPPPRPQKKKQKKA.

2 consecutive transmembrane segments (helical) span residues 13 to 33 (LMTF…AAII) and 44 to 64 (APLV…TVIF). The NPA 1 motif lies at 70–72 (NPT). The next 3 membrane-spanning stretches (helical) occupy residues 89-109 (SLAI…LAIM), 132-152 (GAIA…LIIL), and 163-183 (FLLA…TGPA). The NPA 2 signature appears at 185 to 187 (NPA). A helical membrane pass occupies residues 203-223 (DHIYVYWISSFVGALSAALLF).

This sequence belongs to the MIP/aquaporin (TC 1.A.8) family. SIP (TC 1.A.8.10) subfamily. In terms of tissue distribution, expressed in roots and above ground. Expressed in elongating regions of the root tips, trichome cells of the rosette leaves, vascular tissues of the flower petals, stigma, stamens (anthers and filaments), pollen and the top and bottom (receptacle) of siliques.

Its subcellular location is the endoplasmic reticulum membrane. Water channel required to facilitate the transport of water across cell membrane. The chain is Aquaporin SIP1-1 (SIP1-1) from Arabidopsis thaliana (Mouse-ear cress).